A 541-amino-acid polypeptide reads, in one-letter code: Chaperonin GroEL (541 aa).

Residues 29–32 (TLGP), 86–90 (DGTTT), Gly413, 476–478 (NAA), and Asp492 contribute to the ATP site.

It belongs to the chaperonin (HSP60) family. Forms a cylinder of 14 subunits composed of two heptameric rings stacked back-to-back. Interacts with the co-chaperonin GroES.

Its subcellular location is the cytoplasm. The enzyme catalyses ATP + H2O + a folded polypeptide = ADP + phosphate + an unfolded polypeptide.. Its function is as follows. Together with its co-chaperonin GroES, plays an essential role in assisting protein folding. The GroEL-GroES system forms a nano-cage that allows encapsulation of the non-native substrate proteins and provides a physical environment optimized to promote and accelerate protein folding. The chain is Chaperonin GroEL from Streptococcus equi subsp. equi (strain 4047).